Consider the following 154-residue polypeptide: MKTFKGVASAKDMRVAIVGACFNGPIADALVSGAQQTFLDLGGAEDMLTVVRVPGSFEIPCTLKKLLTSGVKYDAIVACGVLIKGETTHYDHIADQVSARISELSLEFNLPITFSVITAPCIDSAWQRAGIKGSNLGISGMKTALEMADLFKKL.

5-amino-6-(D-ribitylamino)uracil-binding positions include Phe-22, 56–58 (SFE), and 81–83 (VLI). 86 to 87 (ET) contacts (2S)-2-hydroxy-3-oxobutyl phosphate. Residue His-89 is the Proton donor of the active site. Position 114 (Phe-114) interacts with 5-amino-6-(D-ribitylamino)uracil. Arg-128 contacts (2S)-2-hydroxy-3-oxobutyl phosphate.

The protein belongs to the DMRL synthase family.

The enzyme catalyses (2S)-2-hydroxy-3-oxobutyl phosphate + 5-amino-6-(D-ribitylamino)uracil = 6,7-dimethyl-8-(1-D-ribityl)lumazine + phosphate + 2 H2O + H(+). It participates in cofactor biosynthesis; riboflavin biosynthesis; riboflavin from 2-hydroxy-3-oxobutyl phosphate and 5-amino-6-(D-ribitylamino)uracil: step 1/2. In terms of biological role, catalyzes the formation of 6,7-dimethyl-8-ribityllumazine by condensation of 5-amino-6-(D-ribitylamino)uracil with 3,4-dihydroxy-2-butanone 4-phosphate. This is the penultimate step in the biosynthesis of riboflavin. This Chlamydia caviae (strain ATCC VR-813 / DSM 19441 / 03DC25 / GPIC) (Chlamydophila caviae) protein is 6,7-dimethyl-8-ribityllumazine synthase.